Reading from the N-terminus, the 105-residue chain is uncharacterized protein (105 aa).

The protein resides in the plastid. This is an uncharacterized protein from Euglena longa (Euglenophycean alga).